The following is a 298-amino-acid chain: Zinc transport system membrane protein TroC (298 aa).

A run of 8 helical transmembrane segments spans residues 16-36, 41-61, 68-88, 97-117, 144-164, 187-207, 229-249, and 255-275; these read VVLG…FAVL, LFGD…FLLT, ILLL…LMVM, GAQG…LTHV, VLLI…FWKE, FMLT…VGVI, VLCA…SVVS, and LSTG…SIML.

The protein belongs to the ABC-3 integral membrane protein family.

It is found in the cell membrane. In terms of biological role, part of an ATP-driven transport system TroABCD for zinc. The chain is Zinc transport system membrane protein TroC (troC) from Treponema pallidum (strain Nichols).